The sequence spans 224 residues: 7-cyano-7-deazaguanine synthase (224 aa).

10–20 (LSGGLDSATVV) lines the ATP pocket. 4 residues coordinate Zn(2+): cysteine 189, cysteine 199, cysteine 202, and cysteine 205.

This sequence belongs to the QueC family. It depends on Zn(2+) as a cofactor.

The catalysed reaction is 7-carboxy-7-deazaguanine + NH4(+) + ATP = 7-cyano-7-deazaguanine + ADP + phosphate + H2O + H(+). It participates in purine metabolism; 7-cyano-7-deazaguanine biosynthesis. In terms of biological role, catalyzes the ATP-dependent conversion of 7-carboxy-7-deazaguanine (CDG) to 7-cyano-7-deazaguanine (preQ(0)). This is 7-cyano-7-deazaguanine synthase from Pseudomonas putida (strain W619).